The chain runs to 939 residues: Translation initiation factor IF-2 (939 aa).

The tract at residues 57 to 274 is disordered; the sequence is RLKPAAPAAP…APTKKNEQKI (218 aa). Composition is skewed to basic and acidic residues over residues 83–122 and 129–138; these read MEPK…KESV and LEQEPPKEEL. Composition is skewed to polar residues over residues 146–158 and 170–180; these read ESAS…SNPL and VATTLATQTDA. The span at 208–227 shows a compositional bias: basic and acidic residues; that stretch reads KRSEEPAPKADRPSLEEART. A compositionally biased stretch (basic residues) spans 252–262; the sequence is ARKKKKEKKKP. Residues 438 to 607 enclose the tr-type G domain; it reads ERPPVVTIMG…LVQSELLELK (170 aa). The tract at residues 447-454 is G1; it reads GHVDHGKT. GTP is bound at residue 447–454; it reads GHVDHGKT. The G2 stretch occupies residues 472-476; the sequence is GITQH. The interval 493 to 496 is G3; that stretch reads DTPG. GTP-binding positions include 493-497 and 547-550; these read DTPGH and NKVD. The G4 stretch occupies residues 547-550; it reads NKVD. A G5 region spans residues 583 to 585; the sequence is SAK.

This sequence belongs to the TRAFAC class translation factor GTPase superfamily. Classic translation factor GTPase family. IF-2 subfamily.

It localises to the cytoplasm. Functionally, one of the essential components for the initiation of protein synthesis. Protects formylmethionyl-tRNA from spontaneous hydrolysis and promotes its binding to the 30S ribosomal subunits. Also involved in the hydrolysis of GTP during the formation of the 70S ribosomal complex. The protein is Translation initiation factor IF-2 of Wolinella succinogenes (strain ATCC 29543 / DSM 1740 / CCUG 13145 / JCM 31913 / LMG 7466 / NCTC 11488 / FDC 602W) (Vibrio succinogenes).